Reading from the N-terminus, the 847-residue chain is Beta-hexosaminidase (847 aa).

Intrachain disulfides connect cysteine 31/cysteine 40, cysteine 377/cysteine 385, and cysteine 484/cysteine 530. Glutamate 519 functions as the Proton donor in the catalytic mechanism.

The protein belongs to the glycosyl hydrolase 20 family.

It carries out the reaction Hydrolysis of terminal non-reducing N-acetyl-D-hexosamine residues in N-acetyl-beta-D-hexosaminides.. It participates in glycan degradation; chitin degradation. Hydrolysis of terminal, non-reducing N-acetyl-beta-D-glucosamine residues in chitobiose and higher analogs, and in glycoproteins. The polypeptide is Beta-hexosaminidase (hex) (Vibrio vulnificus).